The sequence spans 405 residues: Deoxyguanosinetriphosphate triphosphohydrolase-like protein (405 aa).

The HD domain maps to R75–N219.

It belongs to the dGTPase family. Type 2 subfamily.

The chain is Deoxyguanosinetriphosphate triphosphohydrolase-like protein from Allorhizobium ampelinum (strain ATCC BAA-846 / DSM 112012 / S4) (Agrobacterium vitis (strain S4)).